The primary structure comprises 419 residues: MPAENSPAPAYKVSSHGGDSGLDGLGGPGVQLGSPDKKKRKANTQGPSFPPLSEYAPPPNPNSDHLVAANPFDDNYNTISYKPLPSSNPYLGPGYPGFGGYSTFRMPPHVPPRMSSPYCGPYSLRNQPHPFPQNPLGMGFNRPHAFNFGPHDNSSFGNPSYNNALSQNVNMPNQHFRQNPAENFSQIPPQNASQVSNPDLASNFVPGNNSNFTSPLESNHSFIPPPNTFGQAKAPPPKQDFTQGATKNTNQNSSAHPPHLNMDDTVNQSNIELKNVNRNNAVNQENSRSSSTEATNNNPANGTQNKPRQPRGAADACTTEKSNKSSLHPNRHGHSSSDPVYPCGICTNEVNDDQDAILCEASCQKWFHRICTGMTETAYGLLTAEASAVWGCDTCMADKDVQLMRTRETFGPSAVGSDA.

Disordered stretches follow at residues 1–64 (MPAE…PNSD) and 175–338 (HFRQ…SSSD). Residues 18–30 (GDSGLDGLGGPGV) show a composition bias toward gly residues. The short motif at 35–41 (PDKKKRK) is the Nuclear localization signal element. Polar residues-rich tracts occupy residues 175–221 (HFRQ…SNHS) and 240–255 (DFTQ…NSSA). Low complexity predominate over residues 276–286 (VNRNNAVNQEN). A compositionally biased stretch (polar residues) spans 287–307 (SRSSSTEATNNNPANGTQNKP). The segment at 340–398 (VYPCGICTNEVNDDQDAILCEASCQKWFHRICTGMTETAYGLLTAEASAVWGCDTCMAD) adopts a PHD-type zinc-finger fold. Positions 341 to 388 (YPCGICTNEVNDDQDAILCEASCQKWFHRICTGMTETAYGLLTAEASA) are interaction with H3K4me2. Positions 373-391 (GMTETAYGLLTAEASAVWG) are interaction with BCL9.

As to quaternary structure, interacts with BCL9 via The PHD-type zinc finger motiv, and thereby becomes part of the nuclear beta-catenin/TCF complex. Identified in a complex with BCL9L, CDC73, CTNNB1 and PYGO1. Interacts with histone H3 mono-, di- or tri-methylated at 'Lys4' (H3K4me1, H3K4me2, H3K4me3); the interaction is enhanced by the interaction with BCL9.

Its subcellular location is the nucleus. Involved in signal transduction through the Wnt pathway. This chain is Pygopus homolog 1 (PYGO1), found in Homo sapiens (Human).